The primary structure comprises 132 residues: Small ribosomal subunit protein uS8 (132 aa).

The protein belongs to the universal ribosomal protein uS8 family. In terms of assembly, part of the 30S ribosomal subunit. Contacts proteins S5 and S12.

Its function is as follows. One of the primary rRNA binding proteins, it binds directly to 16S rRNA central domain where it helps coordinate assembly of the platform of the 30S subunit. The polypeptide is Small ribosomal subunit protein uS8 (Corynebacterium efficiens (strain DSM 44549 / YS-314 / AJ 12310 / JCM 11189 / NBRC 100395)).